The following is a 264-amino-acid chain: Thymidylate synthase (264 aa).

A dUMP-binding site is contributed by Arg21. His51 contacts (6R)-5,10-methylene-5,6,7,8-tetrahydrofolate. A dUMP-binding site is contributed by Arg126–Arg127. Cys146 serves as the catalytic Nucleophile. Residues Arg166 to Asp169, Asn177, and His207 to Tyr209 contribute to the dUMP site. Asp169 serves as a coordination point for (6R)-5,10-methylene-5,6,7,8-tetrahydrofolate. Ala263 is a (6R)-5,10-methylene-5,6,7,8-tetrahydrofolate binding site.

This sequence belongs to the thymidylate synthase family. Bacterial-type ThyA subfamily. Homodimer.

Its subcellular location is the cytoplasm. The enzyme catalyses dUMP + (6R)-5,10-methylene-5,6,7,8-tetrahydrofolate = 7,8-dihydrofolate + dTMP. It functions in the pathway pyrimidine metabolism; dTTP biosynthesis. Its function is as follows. Catalyzes the reductive methylation of 2'-deoxyuridine-5'-monophosphate (dUMP) to 2'-deoxythymidine-5'-monophosphate (dTMP) while utilizing 5,10-methylenetetrahydrofolate (mTHF) as the methyl donor and reductant in the reaction, yielding dihydrofolate (DHF) as a by-product. This enzymatic reaction provides an intracellular de novo source of dTMP, an essential precursor for DNA biosynthesis. The sequence is that of Thymidylate synthase from Xanthomonas campestris pv. campestris (strain 8004).